The sequence spans 299 residues: Tyrosine recombinase XerC (299 aa).

Residues 1–85 (MERQLDAYCE…AVRGLYHYLN (85 aa)) enclose the Core-binding (CB) domain. The Tyr recombinase domain occupies 106-285 (RLPKTLDTDR…DFQHLATVYD (180 aa)). Catalysis depends on residues R146, K170, H237, R240, and H263. Residue Y272 is the O-(3'-phospho-DNA)-tyrosine intermediate of the active site.

Belongs to the 'phage' integrase family. XerC subfamily. Forms a cyclic heterotetrameric complex composed of two molecules of XerC and two molecules of XerD.

The protein resides in the cytoplasm. Its function is as follows. Site-specific tyrosine recombinase, which acts by catalyzing the cutting and rejoining of the recombining DNA molecules. The XerC-XerD complex is essential to convert dimers of the bacterial chromosome into monomers to permit their segregation at cell division. It also contributes to the segregational stability of plasmids. In Pseudomonas fluorescens, this protein is Tyrosine recombinase XerC.